The primary structure comprises 385 residues: DNA replication and repair protein RecF (385 aa).

Residue 30-37 participates in ATP binding; that stretch reads GANAAGKT.

This sequence belongs to the RecF family.

The protein localises to the cytoplasm. Its function is as follows. The RecF protein is involved in DNA metabolism; it is required for DNA replication and normal SOS inducibility. RecF binds preferentially to single-stranded, linear DNA. It also seems to bind ATP. This Herpetosiphon aurantiacus (strain ATCC 23779 / DSM 785 / 114-95) protein is DNA replication and repair protein RecF.